The chain runs to 668 residues: MTLYDENNLHIIKDNLRYLKLLSKQYPSISSASSEIINLQAILNLPKGTEHFISDVHGEYESFTHMLKNASGVIKRKIDDVFGTSLRECDKKNLATLIYYPEQKLDLIKKSEKNLEDWYKITLYRLIRLCQIVSSKYTRSKVRKSLPSDFAYIIEELLNEQGDRVDKQEYYNSIIETIIDIDRASEFIIAISNVIQRLVVDKLHIIGDIYDRGPGAEIIIEALSKHHSIDIQWGNHDIVWMGAAAGCEACIANVIRISLRYANLSTLEDGYGINLLPLATFAMDFYKEDNCENFKPRTIDKNLNETDIKLLSKMHKAISIIQFKLEGKIIKRRPEFKMGERLLLDKINIKEGTLNLNEKIYKLIDTNFPTLDKENPYELNERERDLVEKLTNSFINSEKLQRHIKFLYSNGNLYLKYNSNLLYHGCIPLNEDGSLKEVTLCKETLKGKSLLDKLDRLAREAYFFKKDPESKLYGMDMMWYLWCGSNSPLFGKKKMTTFERYFLDDKNTHKEQKNPYYKYRNDEKMCTMIFEEFELDADNSHIINGHIPVKTKEGENPIKANGKLLVIDGGFCKAYQPQTGIAGYTLIYNSYGLLLTSHEPFSSIHKAIVEGNDILSSTTILEHVSSRKRVLDTDSGEEIKKQIHDLEMLLVAYRKGLIKEENEANIRF.

It belongs to the FBPase class 3 family. Mn(2+) is required as a cofactor.

It carries out the reaction beta-D-fructose 1,6-bisphosphate + H2O = beta-D-fructose 6-phosphate + phosphate. The protein operates within carbohydrate biosynthesis; gluconeogenesis. The chain is Fructose-1,6-bisphosphatase class 3 from Clostridium botulinum (strain ATCC 19397 / Type A).